The following is a 128-amino-acid chain: Fluoride-specific ion channel FluC (128 aa).

4 consecutive transmembrane segments (helical) span residues 4-24 (LLLA…RYLI), 39-59 (GTLI…EFSM), 71-91 (FLTT…YETI), and 99-119 (ITLG…FVVI). G78 and T81 together coordinate Na(+).

It belongs to the fluoride channel Fluc/FEX (TC 1.A.43) family.

It localises to the cell membrane. The catalysed reaction is fluoride(in) = fluoride(out). With respect to regulation, na(+) is not transported, but it plays an essential structural role and its presence is essential for fluoride channel function. Fluoride-specific ion channel. Important for reducing fluoride concentration in the cell, thus reducing its toxicity. The protein is Fluoride-specific ion channel FluC of Clostridium perfringens (strain ATCC 13124 / DSM 756 / JCM 1290 / NCIMB 6125 / NCTC 8237 / Type A).